We begin with the raw amino-acid sequence, 222 residues long: Riboflavin kinase (222 aa).

The tract at residues 1-92 is unknown; the sequence is MVEAEDLQSL…VRIFNPDQRG (92 aa). The riboflavin kinase stretch occupies residues 93-222; it reads YTLTGTVISG…DTIEVEITHD (130 aa). 102–107 is a CDP binding site; sequence GLGEGR. Mg(2+) contacts are provided by T131 and N133. T188 and E196 together coordinate FMN. A CDP-binding site is contributed by 201–204; it reads CELR.

The protein belongs to the archaeal riboflavin kinase family. Mg(2+) serves as cofactor.

The enzyme catalyses riboflavin + CTP = CDP + FMN + H(+). The protein operates within cofactor biosynthesis; FMN biosynthesis; FMN from riboflavin (CTP route): step 1/1. Functionally, catalyzes the CTP-dependent phosphorylation of riboflavin (vitamin B2) to form flavin mononucleotide (FMN). This is Riboflavin kinase (ribK) from Methanoculleus marisnigri (strain ATCC 35101 / DSM 1498 / JR1).